We begin with the raw amino-acid sequence, 437 residues long: Ribosomal protein uS12 methylthiotransferase RimO (437 aa).

In terms of domain architecture, MTTase N-terminal spans 3-118 (KKFYITTLGC…AGKILREKFP (116 aa)). Residues C12, C48, C81, C157, C161, and C164 each contribute to the [4Fe-4S] cluster site. The Radical SAM core domain maps to 143-370 (NYSKPYAYVK…RDSHLEILEE (228 aa)). Positions 373-437 (ESRIGRTYDA…YEYDMNGTWV (65 aa)) constitute a TRAM domain.

This sequence belongs to the methylthiotransferase family. RimO subfamily. The cofactor is [4Fe-4S] cluster.

The protein localises to the cytoplasm. It carries out the reaction L-aspartate(89)-[ribosomal protein uS12]-hydrogen + (sulfur carrier)-SH + AH2 + 2 S-adenosyl-L-methionine = 3-methylsulfanyl-L-aspartate(89)-[ribosomal protein uS12]-hydrogen + (sulfur carrier)-H + 5'-deoxyadenosine + L-methionine + A + S-adenosyl-L-homocysteine + 2 H(+). Functionally, catalyzes the methylthiolation of an aspartic acid residue of ribosomal protein uS12. The protein is Ribosomal protein uS12 methylthiotransferase RimO of Leptospira interrogans serogroup Icterohaemorrhagiae serovar copenhageni (strain Fiocruz L1-130).